The following is a 660-amino-acid chain: Pentatricopeptide repeat-containing protein At1g03560, mitochondrial (660 aa).

A mitochondrion-targeting transit peptide spans 1–12 (MRRFYRKPFSVP). PPR repeat units follow at residues 151-185 (NLEC…EFPM), 186-220 (TVSA…GIEP), 221-255 (TLYT…RIKP), 256-290 (DIVT…GHEA), 291-325 (DKIT…GIQV), 326-360 (PPHA…GSKP), 361-395 (NVAI…GFKP), 396-430 (DVVT…GLAI), 431-465 (NSMF…GCTR), 466-496 (DSYC…MEEE), 502-536 (TVYT…GITP), 537-571 (TAAC…GVIL), 574-605 (ACED…GREV), and 606-640 (PGRI…GYER).

The protein belongs to the PPR family. P subfamily.

The protein localises to the mitochondrion. In Arabidopsis thaliana (Mouse-ear cress), this protein is Pentatricopeptide repeat-containing protein At1g03560, mitochondrial.